A 367-amino-acid polypeptide reads, in one-letter code: Serine/threonine-protein phosphatase 2A activator 2 (367 aa).

It belongs to the PTPA-type PPIase family.

It localises to the cytoplasm. The enzyme catalyses [protein]-peptidylproline (omega=180) = [protein]-peptidylproline (omega=0). Functionally, PPIases accelerate the folding of proteins. It catalyzes the cis-trans isomerization of proline imidic peptide bonds in oligopeptides. Acts as a regulatory subunit for PP2A-like phosphatases modulating their activity or substrate specificity, probably by inducing a conformational change in the catalytic subunit, a direct target of the PPIase. Can reactivate inactive phosphatase PP2A-phosphatase methylesterase complexes (PP2Ai) in presence of ATP and Mg(2+) by dissociating the inactive form from the complex. In Debaryomyces hansenii (strain ATCC 36239 / CBS 767 / BCRC 21394 / JCM 1990 / NBRC 0083 / IGC 2968) (Yeast), this protein is Serine/threonine-protein phosphatase 2A activator 2 (RRD2).